The following is a 395-amino-acid chain: GPI-anchor transamidase (395 aa).

Positions methionine 1 to alanine 27 are cleaved as a signal peptide. Residues glycine 28–glycine 368 lie on the Lumenal side of the membrane. Positions 79, 82, 118, and 120 each coordinate Ca(2+). Histidine 164 acts as the Proton donor in catalysis. Cysteine 206 functions as the Nucleophile; acyl-thioester intermediate in the catalytic mechanism. 3 residues coordinate a protein: cysteine 206, serine 232, and serine 234. The tract at residues aspartate 231–glutamine 236 is autoinhibitory loop. A disulfide bridge connects residues cysteine 275 and cysteine 280. A helical membrane pass occupies residues glycine 369–threonine 385. Over tyrosine 386–phenylalanine 395 the chain is Cytoplasmic.

Belongs to the peptidase C13 family. In terms of assembly, heteropentamer. Part of the GPI-anchor transamidase complex, consisting of PIGK, PIGT, PIGS, PIGU and GAA1. Interacts with GPAA1. Interacts with PIGT; this interaction, via a disulfide link, stabilizes the expression of GAA1 and PIGK and links them to PIGS. In terms of processing, the disulfide bond between PIGK/GPI8 and PIGT is important for normal enzyme activity.

It localises to the endoplasmic reticulum membrane. It functions in the pathway glycolipid biosynthesis; glycosylphosphatidylinositol-anchor biosynthesis. In the absence of proproteins substrates, exists in an inactive state with a disrupted catalytic site by an autoinhibitory loop. The binding of proprotein substrates, particularly the CSP region, to GPI-T triggers concerted conformational changes that alleviate the inhibition by the autoinhibitory loop. Meanwhile, proprotein residues near the omega- site induce the formation of a catalytic cleft for catalysis, following which the products are released and GPI-T reverts to the inactive state. Functionally, catalytic subunit of the glycosylphosphatidylinositol-anchor (GPI-anchor) transamidase (GPI-T) complex that catalyzes the formation of the linkage between a proprotein and a GPI-anchor and participates in GPI anchored protein biosynthesis. Recognizes diverse proproteins at a C-terminal signal peptide (CSP) region that lacks consensus sequence and replaces it with a GPI-anchor via a transamidation reaction. Transamidation catalysis reaction follows a two-phase mechanism. In the acyl-enzyme phase, the carbonyl group of the proproteins's omega-site undergoes a nucleophilic attack forming an enzyme-substrate thioester bond. Followed by a general acid catalysis that allows CSP releasing, regenerating the carbonyl, and forming the acyl-enzyme intermediate. In the GPI-anchor attachment phase, the amino group of the GPI-anchor's ethanolamine phosphate, the one on third mannose (EtNP3), mediates a nucleophilic attack on the carbonyl of the acyl-enzyme intermediate, replacing the CSP, allowing GPI-anchor attachment to the omega-residue, therefore forming the product and freeing the enzyme. The polypeptide is GPI-anchor transamidase (Mus musculus (Mouse)).